The primary structure comprises 131 residues: UPF0102 protein H16_A3579 (131 aa).

It belongs to the UPF0102 family.

This Cupriavidus necator (strain ATCC 17699 / DSM 428 / KCTC 22496 / NCIMB 10442 / H16 / Stanier 337) (Ralstonia eutropha) protein is UPF0102 protein H16_A3579.